The following is an 827-amino-acid chain: Cadherin-17 (827 aa).

An N-terminal signal peptide occupies residues 1–25 (MVSAQLHFLCLLTLYLTCGYGEEGK). At 26-786 (FSGPLKPMTF…RQDGIPTVGM (761 aa)) the chain is on the extracellular side. Cadherin domains are found at residues 29–127 (PLKP…TFLQ), 128–243 (SKYE…APEP), 244–339 (VEIR…PPTC), 340–448 (LSPV…IPIF), 449–565 (ETSN…VPVF), 566–666 (PQRI…PPRL), and 667–776 (AKDY…RPAG). Asn-148, Asn-249, Asn-418, Asn-545, Asn-573, Asn-586, and Asn-721 each carry an N-linked (GlcNAc...) asparagine glycan. A helical membrane pass occupies residues 787 to 807 (AVGILLTTFLVIGIILAVVFI). Residues 808 to 827 (RMRKDKVENPQSPENKPLRS) are Cytoplasmic-facing.

In terms of tissue distribution, highest expression is found in intestine with lower expression in spleen, bone marrow, lung and testis. No expression detected in liver, kidney, heart, brain or skeletal muscle. Expressed in precursor B-cells and myeloid cells.

The protein resides in the cell membrane. In terms of biological role, cadherins are calcium-dependent cell adhesion proteins. They preferentially interact with themselves in a homophilic manner in connecting cells; cadherins may thus contribute to the sorting of heterogeneous cell types. LI-cadherin may have a role in the morphological organization of liver and intestine. The polypeptide is Cadherin-17 (Cdh17) (Mus musculus (Mouse)).